A 429-amino-acid polypeptide reads, in one-letter code: Glutamate-1-semialdehyde 2,1-aminomutase 2 (429 aa).

Lysine 268 is modified (N6-(pyridoxal phosphate)lysine).

This sequence belongs to the class-III pyridoxal-phosphate-dependent aminotransferase family. HemL subfamily. In terms of assembly, homodimer. It depends on pyridoxal 5'-phosphate as a cofactor.

It localises to the cytoplasm. It carries out the reaction (S)-4-amino-5-oxopentanoate = 5-aminolevulinate. Its pathway is porphyrin-containing compound metabolism; protoporphyrin-IX biosynthesis; 5-aminolevulinate from L-glutamyl-tRNA(Glu): step 2/2. This Bacillus cereus (strain B4264) protein is Glutamate-1-semialdehyde 2,1-aminomutase 2.